The following is an 834-amino-acid chain: Periplasmic nitrate reductase (834 aa).

The segment at residues 1-32 is a signal peptide (tat-type signal); that stretch reads MTDMKIDRRQMLKLEAAAIAAAAAGMPSTSLA. One can recognise a 4Fe-4S Mo/W bis-MGD-type domain in the interval 44–100; it reads LKWDKAACRFCGTGCSVMVATKDNRVVATHGDIKAEVNRGLNCVKGYFLSKIMYGHD. [4Fe-4S] cluster is bound by residues C51, C54, C58, and C86. Residues K88, Q155, N180, C184, 217–224, 248–252, 267–269, M378, Q382, N488, 514–515, K537, D564, and 724–733 contribute to the Mo-bis(molybdopterin guanine dinucleotide) site; these read WGSNMAEM, STFEH, QTD, SD, and TGRVVEHWHS. W800 is a binding site for substrate. The Mo-bis(molybdopterin guanine dinucleotide) site is built by N808 and K825.

Belongs to the prokaryotic molybdopterin-containing oxidoreductase family. NasA/NapA/NarB subfamily. In terms of assembly, component of the periplasmic nitrate reductase NapAB complex composed of NapA and NapB. It depends on [4Fe-4S] cluster as a cofactor. Mo-bis(molybdopterin guanine dinucleotide) is required as a cofactor. In terms of processing, predicted to be exported by the Tat system. The position of the signal peptide cleavage has not been experimentally proven.

The protein localises to the periplasm. The catalysed reaction is 2 Fe(II)-[cytochrome] + nitrate + 2 H(+) = 2 Fe(III)-[cytochrome] + nitrite + H2O. Its function is as follows. Catalytic subunit of the periplasmic nitrate reductase complex NapAB. Receives electrons from NapB and catalyzes the reduction of nitrate to nitrite. This Bradyrhizobium sp. (strain BTAi1 / ATCC BAA-1182) protein is Periplasmic nitrate reductase.